Consider the following 260-residue polypeptide: Global transcriptional regulator CodY (260 aa).

Positions M1–L159 are GAF domain. Residues A207–R226 constitute a DNA-binding region (H-T-H motif).

This sequence belongs to the CodY family.

The protein resides in the cytoplasm. In terms of biological role, DNA-binding global transcriptional regulator which is involved in the adaptive response to starvation and acts by directly or indirectly controlling the expression of numerous genes in response to nutrient availability. During rapid exponential growth, CodY is highly active and represses genes whose products allow adaptation to nutrient depletion. The protein is Global transcriptional regulator CodY of Streptococcus pyogenes serotype M3 (strain SSI-1).